A 332-amino-acid chain; its full sequence is 2,3-diketo-L-gulonate reductase (332 aa).

His-44 functions as the Proton donor in the catalytic mechanism. NAD(+) is bound by residues Ile-168–Ser-174, Trp-224–Lys-225, and Gly-304–Glu-306.

The protein belongs to the LDH2/MDH2 oxidoreductase family. DlgD subfamily. In terms of assembly, homodimer.

It localises to the cytoplasm. It carries out the reaction 3-dehydro-L-gulonate + NAD(+) = 2,3-dioxo-L-gulonate + NADH + H(+). The enzyme catalyses 3-dehydro-L-gulonate + NADP(+) = 2,3-dioxo-L-gulonate + NADPH + H(+). Its function is as follows. Catalyzes the reduction of 2,3-diketo-L-gulonate in the presence of NADH, to form 3-keto-L-gulonate. The protein is 2,3-diketo-L-gulonate reductase of Salmonella agona (strain SL483).